Here is a 321-residue protein sequence, read N- to C-terminus: MKFAVVGTGVIGSGWITRMLAHGHEVIATDPSEGAYERMLTQVKQNWPYAEQMGLAENASIQNLTFTPHLEEAVKDADHIQENVPEVEEIKDAVLKEIDFYAKPEATIGSSTSGIMPSELQANLSHPERLVVAHPFHPVYILPLVEIVPGKQTSEETTVKAEQIYESIGMDVLHVRHEIEGHIADRLMEALWRESLHIVNDGIATTEEVDKAFTHAAGLRYAQYGPFMTFHLAGGEGGMRHMLKQFGPALKKPWTKLIAPELTDDLYHKVVSGSEASSQGYTMSELDQKRNEFLIKVKELAEQYWPSDSKAMKKSNGAELQ.

Residue 7–12 (GTGVIG) participates in NAD(+) binding.

The protein belongs to the 3-hydroxyacyl-CoA dehydrogenase family. L-carnitine dehydrogenase subfamily. Homodimer.

It is found in the cytoplasm. The catalysed reaction is carnitine + NAD(+) = 3-dehydrocarnitine + NADH + H(+). Its pathway is amine and polyamine metabolism; carnitine metabolism. Catalyzes the NAD(+)-dependent oxidation of L-carnitine to 3-dehydrocarnitine. In Staphylococcus epidermidis (strain ATCC 12228 / FDA PCI 1200), this protein is L-carnitine dehydrogenase.